A 150-amino-acid polypeptide reads, in one-letter code: UPF0260 protein PP_4587 (150 aa).

It belongs to the UPF0260 family.

The polypeptide is UPF0260 protein PP_4587 (Pseudomonas putida (strain ATCC 47054 / DSM 6125 / CFBP 8728 / NCIMB 11950 / KT2440)).